We begin with the raw amino-acid sequence, 133 residues long: ATP synthase epsilon chain, chloroplastic (133 aa).

The protein belongs to the ATPase epsilon chain family. As to quaternary structure, F-type ATPases have 2 components, CF(1) - the catalytic core - and CF(0) - the membrane proton channel. CF(1) has five subunits: alpha(3), beta(3), gamma(1), delta(1), epsilon(1). CF(0) has three main subunits: a, b and c.

It is found in the plastid. Its subcellular location is the chloroplast thylakoid membrane. Its function is as follows. Produces ATP from ADP in the presence of a proton gradient across the membrane. This chain is ATP synthase epsilon chain, chloroplastic, found in Vitis vinifera (Grape).